We begin with the raw amino-acid sequence, 233 residues long: Small ribosomal subunit protein uS2c (233 aa).

This sequence belongs to the universal ribosomal protein uS2 family.

It is found in the plastid. It localises to the chloroplast. This Galdieria sulphuraria (Red alga) protein is Small ribosomal subunit protein uS2c (rps2).